The following is a 976-amino-acid chain: Ephrin type-B receptor 4b (976 aa).

The signal sequence occupies residues 1 to 23 (MDRVCWIMALSWFWMVSTGLVSA). Topologically, residues 24–541 (EEEVLMNTKL…ESPSRLMLTG (518 aa)) are extracellular. Residues 25–204 (EEVLMNTKLE…FFKKCPAVSR (180 aa)) form the Eph LBD domain. Cystine bridges form between C69/C186 and C103/C113. 2 consecutive Fibronectin type-III domains span residues 326–434 (PPSA…TSRD) and 438–529 (PVSG…TLPD). Residues 542–562 (VLVAIGLLILIAVVIVAVFCF) form a helical membrane-spanning segment. At 563–976 (RRSTRRRDPD…LRIHGGSLRY (414 aa)) the chain is on the cytoplasmic side. The region spanning 613 to 897 (VKIEEVIGAG…IPDGPSHPLL (285 aa)) is the Protein kinase domain. Residues 619-627 (IGAGEFGEV) and K645 contribute to the ATP site. The active-site Proton acceptor is the D738. The SAM domain maps to 906 to 970 (SHCSSVADWL…LSSVQTLRIH (65 aa)).

The protein belongs to the protein kinase superfamily. Tyr protein kinase family. Ephrin receptor subfamily.

The protein localises to the cell membrane. The catalysed reaction is L-tyrosyl-[protein] + ATP = O-phospho-L-tyrosyl-[protein] + ADP + H(+). Receptor tyrosine kinase which binds promiscuously transmembrane ephrin-B family ligands residing on adjacent cells, leading to contact-dependent bidirectional signaling into neighboring cells. The signaling pathway downstream of the receptor is referred to as forward signaling while the signaling pathway downstream of the ephrin ligand is referred to as reverse signaling. Together with its cognate ligand/functional ligand EFNB2 is involved in the regulation of cell adhesion and cell migration, and plays a central role in heart morphogenesis, angiogenesis and blood vessel remodeling and permeability. EPHB4-mediated forward signaling controls cellular repulsion and segregation from EFNB2-expressing cells. Involved in somitogenesis. In Danio rerio (Zebrafish), this protein is Ephrin type-B receptor 4b.